Reading from the N-terminus, the 426-residue chain is Protein arginine methyltransferase NDUFAF7 homolog, mitochondrial (426 aa).

This sequence belongs to the NDUFAF7 family.

It localises to the mitochondrion. The catalysed reaction is L-arginyl-[protein] + 2 S-adenosyl-L-methionine = N(omega),N(omega)'-dimethyl-L-arginyl-[protein] + 2 S-adenosyl-L-homocysteine + 2 H(+). Arginine methyltransferase involved in the assembly or stability of mitochondrial NADH:ubiquinone oxidoreductase complex (complex I). In Caenorhabditis elegans, this protein is Protein arginine methyltransferase NDUFAF7 homolog, mitochondrial.